Consider the following 390-residue polypeptide: Cystathionine beta-lyase (390 aa).

Position 202 is an N6-(pyridoxal phosphate)lysine (Lys-202).

This sequence belongs to the trans-sulfuration enzymes family. The cofactor is pyridoxal 5'-phosphate.

It is found in the cytoplasm. The protein resides in the nucleus. The enzyme catalyses L,L-cystathionine + H2O = L-homocysteine + pyruvate + NH4(+). It catalyses the reaction an S-substituted L-cysteine + H2O = a thiol + pyruvate + NH4(+). It functions in the pathway amino-acid biosynthesis; L-methionine biosynthesis via de novo pathway; L-homocysteine from L-cystathionine: step 1/1. The sequence is that of Cystathionine beta-lyase (str3) from Schizosaccharomyces pombe (strain 972 / ATCC 24843) (Fission yeast).